The following is a 375-amino-acid chain: Pectate lyase C (375 aa).

The first 22 residues, 1–22 (MKSLITPITAGLLLALSQPLLA), serve as a signal peptide directing secretion. Cys-94 and Cys-177 are joined by a disulfide. Positions 151, 153, 188, and 192 each coordinate Ca(2+). The active site involves Arg-240. Residues Cys-351 and Cys-374 are joined by a disulfide bond.

The protein belongs to the polysaccharide lyase 1 family. PLADES subfamily. Requires Ca(2+) as cofactor.

The protein resides in the secreted. The catalysed reaction is Eliminative cleavage of (1-&gt;4)-alpha-D-galacturonan to give oligosaccharides with 4-deoxy-alpha-D-galact-4-enuronosyl groups at their non-reducing ends.. It functions in the pathway glycan metabolism; pectin degradation; 2-dehydro-3-deoxy-D-gluconate from pectin: step 2/5. Its function is as follows. Involved in maceration and soft-rotting of plant tissue. This Dickeya chrysanthemi (Pectobacterium chrysanthemi) protein is Pectate lyase C.